Consider the following 486-residue polypeptide: Ribulose bisphosphate carboxylase large chain 3 (486 aa).

2 residues coordinate substrate: Asn125 and Thr175. The active-site Proton acceptor is the Lys177. Lys179 provides a ligand contact to substrate. 3 residues coordinate Mg(2+): Lys203, Asp205, and Glu206. An N6-carboxylysine modification is found at Lys203. Residue His295 is the Proton acceptor of the active site. 3 residues coordinate substrate: Arg296, His328, and Ser380.

It belongs to the RuBisCO large chain family. Type I subfamily. As to quaternary structure, heterohexadecamer of 8 large chains and 8 small chains. Mg(2+) is required as a cofactor.

It catalyses the reaction 2 (2R)-3-phosphoglycerate + 2 H(+) = D-ribulose 1,5-bisphosphate + CO2 + H2O. It carries out the reaction D-ribulose 1,5-bisphosphate + O2 = 2-phosphoglycolate + (2R)-3-phosphoglycerate + 2 H(+). In terms of biological role, ruBisCO catalyzes two reactions: the carboxylation of D-ribulose 1,5-bisphosphate, the primary event in carbon dioxide fixation, as well as the oxidative fragmentation of the pentose substrate. Both reactions occur simultaneously and in competition at the same active site. The sequence is that of Ribulose bisphosphate carboxylase large chain 3 from Bradyrhizobium sp. (strain BTAi1 / ATCC BAA-1182).